Consider the following 249-residue polypeptide: Proteasome subunit alpha (249 aa).

The protein belongs to the peptidase T1A family. In terms of assembly, the 20S proteasome core is composed of 14 alpha and 14 beta subunits that assemble into four stacked heptameric rings, resulting in a barrel-shaped structure. The two inner rings, each composed of seven catalytic beta subunits, are sandwiched by two outer rings, each composed of seven alpha subunits. The catalytic chamber with the active sites is on the inside of the barrel. Has a gated structure, the ends of the cylinder being occluded by the N-termini of the alpha-subunits. Is capped at one or both ends by the proteasome regulatory ATPase, PAN.

It localises to the cytoplasm. Its activity is regulated as follows. The formation of the proteasomal ATPase PAN-20S proteasome complex, via the docking of the C-termini of PAN into the intersubunit pockets in the alpha-rings, triggers opening of the gate for substrate entry. Interconversion between the open-gate and close-gate conformations leads to a dynamic regulation of the 20S proteasome proteolysis activity. Component of the proteasome core, a large protease complex with broad specificity involved in protein degradation. This is Proteasome subunit alpha from Methanosarcina mazei (strain ATCC BAA-159 / DSM 3647 / Goe1 / Go1 / JCM 11833 / OCM 88) (Methanosarcina frisia).